A 646-amino-acid chain; its full sequence is MASGGAFCLIANDGKADKIILAQDLLNSRISNIKNVNKSYGKPDPEPTLSQIEETHMVHFNAHFKPYVPIGFEYNKVRPHTGTPTLGNKLTFGIPQYGDFFHDMVGHHILGACHSSWQDAPIQGSSQMGAHGQLQTFPRNGYDWDNQTPLEGAVYTLVDPFGRPIVPGTKNAYRNLVYYCEYPGERLYENVRFDVNGNSLDEYSSDVTTLVRKFCIPGDKMTGYKHLVGQEVSVEGTSGPLLCNVQDMHKPHQSKPILTDENDTQRTCTHTNPKFLSQHFPENSHNIQTAGKQDITPITDATYLDIRRNVHYSCNGPQTPKYYQPPLALWIKLRFWFNENVNLAIPSVSIPFGERFITIKLASQKDLVNEFPGLFIRQSRFIPGRPSRRNIRFKPWFIPGVISEISLTNNELYINNLFVTPEIHNLFVKRVRFSLIRVHKTQVTHTNNNHHDEKLMSALKWPIEYMFIGLKPTWNISDQNPHQHRDWHKFGHVVNAIMQPTHHAEVSFQDRDTALPDACSSISDISPITYPITLPIIKNISVTAHGINLIDKFPSKFCSSYIPFHYGGNSIKTPDDPGAMMITFALKPREEYQPSGHINVSRAREFYISWDTDYVGSITTADLVVSASAINFLLLQNGSAVLRYST.

It belongs to the NCLDV major capsid protein family. In terms of assembly, homotrimer. The membrane-bound form, but not the cytosolic one, assembles into large complexes. Interacts with the minor capsid proteins M1249L and p17; these interactions form a rigid zipper structure that stabilizes the capsomers.

It is found in the virion. The protein resides in the host endoplasmic reticulum membrane. The protein localises to the host cytoplasm. It localises to the host cytosol. In terms of biological role, capsid protein that self-assembles to form the pseudo-hexameric capsomers of the icosahedral capsid. The capsid is constructed of 2760 pseudo-hexameric capsomers and 12 pentameric capsomers, with a T=277 symmetry, about 200 nm in diameter. The capsid encapsulates the DNA-containing nucleoid, the core shell and the inner membrane. Plays an essential role in virion assembly. Involved in virus attachment to the host cell. This chain is Major capsid protein, found in African swine fever virus (isolate Pig/Kenya/KEN-50/1950) (ASFV).